The following is an 87-amino-acid chain: Translation initiation factor IF-1 2 (87 aa).

The region spanning 1-72 (MAKEELIELN…TKGRINFRHK (72 aa)) is the S1-like domain. The disordered stretch occupies residues 66–87 (RINFRHKDERSGPPSRPPQHRR).

Belongs to the IF-1 family. As to quaternary structure, component of the 30S ribosomal translation pre-initiation complex which assembles on the 30S ribosome in the order IF-2 and IF-3, IF-1 and N-formylmethionyl-tRNA(fMet); mRNA recruitment can occur at any time during PIC assembly.

It is found in the cytoplasm. Its function is as follows. One of the essential components for the initiation of protein synthesis. Stabilizes the binding of IF-2 and IF-3 on the 30S subunit to which N-formylmethionyl-tRNA(fMet) subsequently binds. Helps modulate mRNA selection, yielding the 30S pre-initiation complex (PIC). Upon addition of the 50S ribosomal subunit IF-1, IF-2 and IF-3 are released leaving the mature 70S translation initiation complex. The chain is Translation initiation factor IF-1 2 from Bordetella parapertussis (strain 12822 / ATCC BAA-587 / NCTC 13253).